The chain runs to 406 residues: Dual-specificity RNA methyltransferase RlmN (406 aa).

Catalysis depends on glutamate 119, which acts as the Proton acceptor. The region spanning 125-370 (DKGRGTLCVS…AMVRRTRGDD (246 aa)) is the Radical SAM core domain. Cysteine 132 and cysteine 375 are joined by a disulfide. Residues cysteine 139, cysteine 143, and cysteine 146 each contribute to the [4Fe-4S] cluster site. S-adenosyl-L-methionine is bound by residues 192–193 (GE), serine 224, 246–248 (SLH), and asparagine 332. The S-methylcysteine intermediate role is filled by cysteine 375.

It belongs to the radical SAM superfamily. RlmN family. The cofactor is [4Fe-4S] cluster.

The protein localises to the cytoplasm. It carries out the reaction adenosine(2503) in 23S rRNA + 2 reduced [2Fe-2S]-[ferredoxin] + 2 S-adenosyl-L-methionine = 2-methyladenosine(2503) in 23S rRNA + 5'-deoxyadenosine + L-methionine + 2 oxidized [2Fe-2S]-[ferredoxin] + S-adenosyl-L-homocysteine. The enzyme catalyses adenosine(37) in tRNA + 2 reduced [2Fe-2S]-[ferredoxin] + 2 S-adenosyl-L-methionine = 2-methyladenosine(37) in tRNA + 5'-deoxyadenosine + L-methionine + 2 oxidized [2Fe-2S]-[ferredoxin] + S-adenosyl-L-homocysteine. Specifically methylates position 2 of adenine 2503 in 23S rRNA and position 2 of adenine 37 in tRNAs. m2A2503 modification seems to play a crucial role in the proofreading step occurring at the peptidyl transferase center and thus would serve to optimize ribosomal fidelity. The sequence is that of Dual-specificity RNA methyltransferase RlmN from Xylella fastidiosa (strain M12).